The chain runs to 150 residues: MRVLLQRCYEASVRVEGEIISEIAGGLCLLVGFTHSDTEETVEYMAKKIIGLRVFEDESEKMNISLAERGGAILSVSQFTLYADVSRGKRPSFTKSAPGEKAEGLYNLFNNKLSDAGFIVETGVFGAFMDVKIVNNGPVTIMLDSEEMRK.

Positions 137-138 match the Gly-cisPro motif, important for rejection of L-amino acids motif; the sequence is GP.

It belongs to the DTD family. In terms of assembly, homodimer.

The protein localises to the cytoplasm. The catalysed reaction is glycyl-tRNA(Ala) + H2O = tRNA(Ala) + glycine + H(+). It catalyses the reaction a D-aminoacyl-tRNA + H2O = a tRNA + a D-alpha-amino acid + H(+). Functionally, an aminoacyl-tRNA editing enzyme that deacylates mischarged D-aminoacyl-tRNAs. Also deacylates mischarged glycyl-tRNA(Ala), protecting cells against glycine mischarging by AlaRS. Acts via tRNA-based rather than protein-based catalysis; rejects L-amino acids rather than detecting D-amino acids in the active site. By recycling D-aminoacyl-tRNA to D-amino acids and free tRNA molecules, this enzyme counteracts the toxicity associated with the formation of D-aminoacyl-tRNA entities in vivo and helps enforce protein L-homochirality. This chain is D-aminoacyl-tRNA deacylase, found in Listeria innocua serovar 6a (strain ATCC BAA-680 / CLIP 11262).